The chain runs to 104 residues: L-rhamnose mutarotase (104 aa).

Tyr-18 is a substrate binding site. The Proton donor role is filled by His-22. Residues Tyr-41 and Trp-76–Trp-77 contribute to the substrate site. The disordered stretch occupies residues Pro-85–Asp-104.

The protein belongs to the rhamnose mutarotase family. As to quaternary structure, homodimer.

The protein localises to the cytoplasm. The enzyme catalyses alpha-L-rhamnose = beta-L-rhamnose. The protein operates within carbohydrate metabolism; L-rhamnose metabolism. Its function is as follows. Involved in the anomeric conversion of L-rhamnose. The protein is L-rhamnose mutarotase of Pectobacterium atrosepticum (strain SCRI 1043 / ATCC BAA-672) (Erwinia carotovora subsp. atroseptica).